Here is a 404-residue protein sequence, read N- to C-terminus: Chorismate synthase (404 aa).

Positions 43 and 49 each coordinate NADP(+). Residues 138–140 (RAS), 259–260 (QA), Gly-303, 318–322 (KPIST), and Arg-344 each bind FMN.

This sequence belongs to the chorismate synthase family. As to quaternary structure, homotetramer. The cofactor is FMNH2.

It catalyses the reaction 5-O-(1-carboxyvinyl)-3-phosphoshikimate = chorismate + phosphate. It functions in the pathway metabolic intermediate biosynthesis; chorismate biosynthesis; chorismate from D-erythrose 4-phosphate and phosphoenolpyruvate: step 7/7. Catalyzes the anti-1,4-elimination of the C-3 phosphate and the C-6 proR hydrogen from 5-enolpyruvylshikimate-3-phosphate (EPSP) to yield chorismate, which is the branch point compound that serves as the starting substrate for the three terminal pathways of aromatic amino acid biosynthesis. This reaction introduces a second double bond into the aromatic ring system. This is Chorismate synthase from Mycolicibacterium paratuberculosis (strain ATCC BAA-968 / K-10) (Mycobacterium paratuberculosis).